The primary structure comprises 90 residues: Co-chaperonin GroES (90 aa).

It belongs to the GroES chaperonin family. As to quaternary structure, heptamer of 7 subunits arranged in a ring. Interacts with the chaperonin GroEL.

Its subcellular location is the cytoplasm. In terms of biological role, together with the chaperonin GroEL, plays an essential role in assisting protein folding. The GroEL-GroES system forms a nano-cage that allows encapsulation of the non-native substrate proteins and provides a physical environment optimized to promote and accelerate protein folding. GroES binds to the apical surface of the GroEL ring, thereby capping the opening of the GroEL channel. This is Co-chaperonin GroES from Phocaeicola vulgatus (strain ATCC 8482 / DSM 1447 / JCM 5826 / CCUG 4940 / NBRC 14291 / NCTC 11154) (Bacteroides vulgatus).